Consider the following 272-residue polypeptide: 3-methyl-2-oxobutanoate hydroxymethyltransferase (272 aa).

Mg(2+) contacts are provided by aspartate 51 and aspartate 90. 3-methyl-2-oxobutanoate is bound by residues 51 to 52 (DS), aspartate 90, and lysine 119. A Mg(2+)-binding site is contributed by glutamate 121. Glutamate 188 acts as the Proton acceptor in catalysis.

Belongs to the PanB family. Homodecamer; pentamer of dimers. It depends on Mg(2+) as a cofactor.

The protein localises to the cytoplasm. The catalysed reaction is 3-methyl-2-oxobutanoate + (6R)-5,10-methylene-5,6,7,8-tetrahydrofolate + H2O = 2-dehydropantoate + (6S)-5,6,7,8-tetrahydrofolate. Its pathway is cofactor biosynthesis; (R)-pantothenate biosynthesis; (R)-pantoate from 3-methyl-2-oxobutanoate: step 1/2. Functionally, catalyzes the reversible reaction in which hydroxymethyl group from 5,10-methylenetetrahydrofolate is transferred onto alpha-ketoisovalerate to form ketopantoate. The sequence is that of 3-methyl-2-oxobutanoate hydroxymethyltransferase from Dechloromonas aromatica (strain RCB).